We begin with the raw amino-acid sequence, 103 residues long: Large ribosomal subunit protein bL21 (103 aa).

The protein belongs to the bacterial ribosomal protein bL21 family. Part of the 50S ribosomal subunit. Contacts protein L20.

This protein binds to 23S rRNA in the presence of protein L20. In Polaromonas sp. (strain JS666 / ATCC BAA-500), this protein is Large ribosomal subunit protein bL21.